A 713-amino-acid polypeptide reads, in one-letter code: Meiotic activator RIM4 (713 aa).

The segment at 1–90 (MKTEISTADS…TSTSTESRGR (90 aa)) is disordered. The span at 21-31 (ADSELVIREDI) shows a compositional bias: basic and acidic residues. Over residues 50–71 (GEDSDTDSDNFLQDPEDDVDEE) the composition is skewed to acidic residues. A compositionally biased stretch (low complexity) spans 74–90 (GRGTVTTTSTSTESRGR). The region spanning 93–172 (SCIFVASLAA…RRLRCEPAKV (80 aa)) is the RRM 1 domain. Positions 276 to 337 (HQNNGIINND…SDGIYDDEDK (62 aa)) are disordered. A compositionally biased stretch (low complexity) spans 278-298 (NNGIINNDGSNNNDNNNSNNN). Residues 299–327 (NREDSRRNGDVIEEECGHVHGSDSEEKLT) show a composition bias toward basic and acidic residues. In terms of domain architecture, RRM 2 spans 346–420 (RSIFVGQLDK…KTMHVQYKEV (75 aa)). The interval 524 to 609 (KSMPNSWSSP…KRYARRSSYG (86 aa)) is disordered. S525 is modified (phosphoserine). The span at 526–546 (MPNSWSSPSSKSVNSENESVN) shows a compositional bias: low complexity. The span at 563 to 574 (GRYNAANSFTTY) shows a compositional bias: polar residues. Residues 575-594 (NNSSAGNSNNNNNNNNSNSN) show a composition bias toward low complexity.

Post-translationally, polyubiquitinated by RSP5.

Its function is as follows. Positive regulator of sporulation-specific genes and of sporulation. Required for premeiotic DNA synthesis and meiotic chromosomal segregation. May act in a nutritional signaling pathway. The sequence is that of Meiotic activator RIM4 (RIM4) from Saccharomyces cerevisiae (strain ATCC 204508 / S288c) (Baker's yeast).